The chain runs to 175 residues: Large ribosomal subunit protein bL17m (175 aa).

The transit peptide at 1–8 (MRLSVAAA) directs the protein to the mitochondrion. Residues 155–175 (DLRQSQEASNHSSHTAQTPGI) are disordered. Polar residues predominate over residues 161–175 (EASNHSSHTAQTPGI).

It belongs to the bacterial ribosomal protein bL17 family. Component of the mitochondrial large ribosomal subunit (mt-LSU). Mature mammalian 55S mitochondrial ribosomes consist of a small (28S) and a large (39S) subunit. The 28S small subunit contains a 12S ribosomal RNA (12S mt-rRNA) and 30 different proteins. The 39S large subunit contains a 16S rRNA (16S mt-rRNA), a copy of mitochondrial valine transfer RNA (mt-tRNA(Val)), which plays an integral structural role, and 52 different proteins. As to expression, detected in adrenal gland, mammary gland and adipose tissue.

The protein resides in the mitochondrion. This Homo sapiens (Human) protein is Large ribosomal subunit protein bL17m (MRPL17).